A 188-amino-acid chain; its full sequence is FMN reductase (NADH) RutF (188 aa).

This sequence belongs to the non-flavoprotein flavin reductase family. RutF subfamily.

It catalyses the reaction FMNH2 + NAD(+) = FMN + NADH + 2 H(+). Functionally, catalyzes the reduction of FMN to FMNH2 which is used to reduce pyrimidine by RutA via the Rut pathway. The chain is FMN reductase (NADH) RutF from Acinetobacter baylyi (strain ATCC 33305 / BD413 / ADP1).